The chain runs to 392 residues: Probable glucan endo-1,6-beta-glucosidase B (392 aa).

A signal peptide spans 1–18 (MKVTRLAVLNTLATLTVA). Asn-31 is a glycosylation site (N-linked (GlcNAc...) asparagine). The active-site Proton donor is Glu-220. The Nucleophile role is filled by Glu-322.

This sequence belongs to the glycosyl hydrolase 5 (cellulase A) family.

It is found in the secreted. The catalysed reaction is Random hydrolysis of (1-&gt;6)-linkages in (1-&gt;6)-beta-D-glucans.. Its function is as follows. Beta-glucanases participate in the metabolism of beta-glucan, the main structural component of the cell wall. Acts on lutean, pustulan and 1,6-oligo-beta-D-glucosides. The polypeptide is Probable glucan endo-1,6-beta-glucosidase B (exgB) (Aspergillus flavus (strain ATCC 200026 / FGSC A1120 / IAM 13836 / NRRL 3357 / JCM 12722 / SRRC 167)).